The primary structure comprises 90 residues: UPF0297 protein Cthe_0151 (90 aa).

It belongs to the UPF0297 family.

The sequence is that of UPF0297 protein Cthe_0151 from Acetivibrio thermocellus (strain ATCC 27405 / DSM 1237 / JCM 9322 / NBRC 103400 / NCIMB 10682 / NRRL B-4536 / VPI 7372) (Clostridium thermocellum).